We begin with the raw amino-acid sequence, 167 residues long: NAD(P)H-quinone oxidoreductase subunit I, chloroplastic (167 aa).

2 consecutive 4Fe-4S ferredoxin-type domains span residues 55-84 (GRIHFEFDKCIACEVCVRVCPIDLPVVDWK) and 95-124 (LNYSIDFGICIFCGNCVEYCPTNCLSMTEE). [4Fe-4S] cluster contacts are provided by Cys-64, Cys-67, Cys-70, Cys-74, Cys-104, Cys-107, Cys-110, and Cys-114.

This sequence belongs to the complex I 23 kDa subunit family. NDH is composed of at least 16 different subunits, 5 of which are encoded in the nucleus. It depends on [4Fe-4S] cluster as a cofactor.

The protein localises to the plastid. The protein resides in the chloroplast thylakoid membrane. The enzyme catalyses a plastoquinone + NADH + (n+1) H(+)(in) = a plastoquinol + NAD(+) + n H(+)(out). It catalyses the reaction a plastoquinone + NADPH + (n+1) H(+)(in) = a plastoquinol + NADP(+) + n H(+)(out). Functionally, NDH shuttles electrons from NAD(P)H:plastoquinone, via FMN and iron-sulfur (Fe-S) centers, to quinones in the photosynthetic chain and possibly in a chloroplast respiratory chain. The immediate electron acceptor for the enzyme in this species is believed to be plastoquinone. Couples the redox reaction to proton translocation, and thus conserves the redox energy in a proton gradient. The sequence is that of NAD(P)H-quinone oxidoreductase subunit I, chloroplastic from Arabis hirsuta (Hairy rock-cress).